The primary structure comprises 82 residues: Myosin light chain alkali (82 aa).

The EF-hand domain occupies 7–42 (GCYEDFIECLKLYDKEENGTMLLAELQHALLALGEN).

As to quaternary structure, myosin is a hexamer of 2 heavy chains and 4 light chains.

The polypeptide is Myosin light chain alkali (Mlc1) (Drosophila teissieri (Fruit fly)).